Consider the following 119-residue polypeptide: Autophagy-related protein 8c (119 aa).

Residue G117 is the site of Phosphatidylethanolamine amidated glycine attachment. Positions 118–119 are cleaved as a propeptide — removed in mature form; the sequence is LV.

This sequence belongs to the ATG8 family. As to quaternary structure, interacts with ATG4. Interacts with NBR1. The C-terminal 2 residues are removed by ATG4 to expose Gly-117 at the C-terminus. This Gly-117 forms then a thioester bond with the 'Cys-558' of ATG7 (E1-like activating enzyme) before being transferred to the 'Cys-258' of ATG3 (the specific E2 conjugating enzyme), in order to be finally amidated with phosphatidylethanolamine. This lipid modification anchors ATG8 to autophagosomes. In terms of tissue distribution, constitutively expressed.

Its subcellular location is the cytoplasmic vesicle. The protein localises to the autophagosome membrane. The protein resides in the vacuole membrane. It localises to the cytoplasm. It is found in the cytoskeleton. In terms of biological role, ubiquitin-like modifier involved in autophagosomes formation. May mediate the delivery of the autophagosomes to the vacuole via the microtubule cytoskeleton. This Arabidopsis thaliana (Mouse-ear cress) protein is Autophagy-related protein 8c (ATG8C).